Reading from the N-terminus, the 445-residue chain is DDB1- and CUL4-associated factor 13 (445 aa).

Lysine 49 is subject to N6-acetyllysine. WD repeat units follow at residues 64 to 104, 107 to 146, 149 to 191, 194 to 234, 236 to 276, 280 to 319, and 323 to 362; these read GHRD…CIRT, AHEG…YGEE, PLYT…PVCS, WGFD…PLKK, ILEM…TPVM, DHVS…SREV, and KRMQ…KLGV. A required for nucleolar location region spans residues 353–441; sequence KANASEKLGV…IVSERKKHVV (89 aa).

It belongs to the WD repeat DCAF13/WDSOF1 family. Component of the DCX(DCAF13) E3 ubiquitin ligase complex, at least composed of CUL4 (CUL4A or CUL4B), DDB1, DCAF13 and RBX1. Interacts (via WD40 domain) with DDB1. Interacts with ESR1 and LATS1. In terms of tissue distribution, uniformly distributed in trophectoderm cells and inner cells mass in blastocyst embryos. Expressed in oocytes as early as the primordial follicle stage. Endometrial expression increases during decidualization and is highly expressed in decidua.

The protein localises to the nucleus. The protein resides in the nucleolus. Its pathway is protein modification; protein ubiquitination. Part of the small subunit (SSU) processome, first precursor of the small eukaryotic ribosomal subunit. During the assembly of the SSU processome in the nucleolus, many ribosome biogenesis factors, an RNA chaperone and ribosomal proteins associate with the nascent pre-rRNA and work in concert to generate RNA folding, modifications, rearrangements and cleavage as well as targeted degradation of pre-ribosomal RNA by the RNA exosome. Participates in the 18S rRNA processing in growing oocytes, being essential for oocyte nonsurrounded nucleolus (NSN) to surrounded nucleolus (SN) transition. Functionally, substrate-recognition component of a DCX (DDB1-CUL4-X-box) E3 ubiquitin-protein ligase complex that plays a key role in embryo preimplantation and is required for normal meiotic cycle progression in oocytes. Acts as a maternal factor that regulates oocyte and zygotic chromatin tightness during maternal to zygotic transition. Also involved in the transformation of the endometrium into the decidua, known as decidualization, providing a solid foundation for implantation of blastocysts. Recognizes the histone methyltransferases SUV39H1 and SUV39H2 and directs them to polyubiquitination and proteasomal degradation, which facilitates the H3K9me3 removal and early zygotic gene expression, essential steps for progressive genome reprogramming and the establishment of pluripotency during preimplantation embryonic development. Supports the spindle assembly and chromosome condensation during oocyte meiotic division by targeting the polyubiquitination and degradation of PTEN, a lipid phosphatase that inhibits PI3K pathway as well as oocyte growth and maturation. Targets PMP22 for polyubiquitination and proteasomal degradation. This is DDB1- and CUL4-associated factor 13 (Dcaf13) from Mus musculus (Mouse).